A 296-amino-acid chain; its full sequence is Small ribosomal subunit biogenesis GTPase RsgA (296 aa).

The CP-type G domain maps to Lys-63–Tyr-224. GTP-binding positions include Ser-112–Asp-115 and Gly-167–Thr-175. The Zn(2+) site is built by Cys-248, Cys-253, His-255, and Cys-261.

The protein belongs to the TRAFAC class YlqF/YawG GTPase family. RsgA subfamily. In terms of assembly, monomer. Associates with 30S ribosomal subunit, binds 16S rRNA. The cofactor is Zn(2+).

The protein resides in the cytoplasm. In terms of biological role, one of several proteins that assist in the late maturation steps of the functional core of the 30S ribosomal subunit. Helps release RbfA from mature subunits. May play a role in the assembly of ribosomal proteins into the subunit. Circularly permuted GTPase that catalyzes slow GTP hydrolysis, GTPase activity is stimulated by the 30S ribosomal subunit. In Limosilactobacillus fermentum (strain NBRC 3956 / LMG 18251) (Lactobacillus fermentum), this protein is Small ribosomal subunit biogenesis GTPase RsgA.